We begin with the raw amino-acid sequence, 215 residues long: Probable cutinase 3 (215 aa).

The first 17 residues, 1–17 (MHFRALLVSALATLAMA), serve as a signal peptide directing secretion. 2 cysteine pairs are disulfide-bonded: Cys39–Cys118 and Cys65–Cys79. Ser129 (nucleophile) is an active-site residue. A disulfide bond links Cys180 and Cys187. Residue Asp184 is part of the active site. The active-site Proton donor/acceptor is the His197.

This sequence belongs to the cutinase family.

It localises to the secreted. It catalyses the reaction cutin + H2O = cutin monomers.. Its function is as follows. Catalyzes the hydrolysis of complex carboxylic polyesters found in the cell wall of plants. Degrades cutin, a macromolecule that forms the structure of the plant cuticle. The protein is Probable cutinase 3 of Aspergillus clavatus (strain ATCC 1007 / CBS 513.65 / DSM 816 / NCTC 3887 / NRRL 1 / QM 1276 / 107).